The sequence spans 501 residues: MTFISKTQHADVVLIGGGIMSATLGAFIKQLEPTWTISLFERLDEAGLESSGPWNNAGTGHAALCELNYSPAAKDGSVDPSKALHINEQFQLSRQFWSHLVDSNVIGSPKGFINTVPHMSFVIGDDHSNFLKNRYEALKPNTLFRSMEYTEDQDQIAKWAPLIVKGRDRKQRVAATRAAEGTDVDFGALTRELTGYLQSSGAEVNYGHDVTNIHRAAGGGWDLSIKHPKSGEHGRIHAKFVFVGAGGGALHLLQASGIPESKGYGGFPVSGQFFRCTDDAITSQHSAKVYGQASVGAPPMSVPHLDTRYVDGKRSLLFGPYAGFSTNFLKTSSYLDLPLSIRPGNIIPMLAVAKDNMDLTAYLIKEVAKRHEAKVEALREYYPEAAGGNWELITAGQRVQIIKKHPQKGGVLQFGTEVIASRDGSIGALLGASPGASTAVPIMIELLQKSFPKNFKGWQSKLKDMMPGYGVKLNENPDLAAELEASTARSLQLEVANAIQG.

The protein belongs to the MQO family. FAD is required as a cofactor.

It carries out the reaction (S)-malate + a quinone = a quinol + oxaloacetate. It functions in the pathway carbohydrate metabolism; tricarboxylic acid cycle; oxaloacetate from (S)-malate (quinone route): step 1/1. In Paenarthrobacter aurescens (strain TC1), this protein is Probable malate:quinone oxidoreductase.